Consider the following 664-residue polypeptide: UV-stimulated scaffold protein A homolog (664 aa).

The segment at 10 to 153 is VHS-like; the sequence is KVIGLIEKAT…LKNTLKLKFP (144 aa). The stretch at 148-180 forms a coiled coil; the sequence is LKLKFPDLQANAARIQRERQEREMKTKEILRNK. 2 disordered regions span residues 330–350 and 362–403; these read HGNE…DGKV and MRTQ…GNSL. Positions 334–347 are enriched in acidic residues; the sequence is ETNEEEEDIWEEDD. Residues 363–374 show a composition bias toward polar residues; that stretch reads RTQQSENSSLPS. Basic and acidic residues predominate over residues 377–387; the sequence is EAKKSTSEARS. Over residues 388 to 402 the composition is skewed to polar residues; it reads NKVSNTKKVGSSGNS. The UVSSA-type zinc finger occupies 473-500; that stretch reads TPPCRASLKKGGLCQRRDLRVCPFHGPI. Zn(2+) is bound by residues Cys476, Cys486, Cys494, and His497. 2 disordered regions span residues 514–546 and 640–664; these read SPLD…DPNQ and VKGT…ANQW. Polar residues-rich tracts occupy residues 521 to 533 and 640 to 650; these read NQTS…NQDV and VKGTNPQQLAQ.

This sequence belongs to the UVSSA family.

It is found in the chromosome. This Arabidopsis thaliana (Mouse-ear cress) protein is UV-stimulated scaffold protein A homolog.